Here is a 420-residue protein sequence, read N- to C-terminus: S-adenosylmethionine synthase (420 aa).

His-16 contacts ATP. Mg(2+) is bound at residue Asp-18. A K(+)-binding site is contributed by Glu-44. Positions 57 and 100 each coordinate L-methionine. Positions 100–110 are flexible loop; sequence QSPDIAQGVNT. ATP contacts are provided by residues 175 to 177, 251 to 252, Asp-260, 266 to 267, Ala-283, and Lys-287; these read DGK, KF, and RK. Residue Asp-260 participates in L-methionine binding. Residue Lys-291 coordinates L-methionine.

This sequence belongs to the AdoMet synthase family. In terms of assembly, homotetramer; dimer of dimers. Mg(2+) is required as a cofactor. The cofactor is K(+).

It localises to the cytoplasm. The catalysed reaction is L-methionine + ATP + H2O = S-adenosyl-L-methionine + phosphate + diphosphate. The protein operates within amino-acid biosynthesis; S-adenosyl-L-methionine biosynthesis; S-adenosyl-L-methionine from L-methionine: step 1/1. In terms of biological role, catalyzes the formation of S-adenosylmethionine (AdoMet) from methionine and ATP. The overall synthetic reaction is composed of two sequential steps, AdoMet formation and the subsequent tripolyphosphate hydrolysis which occurs prior to release of AdoMet from the enzyme. The chain is S-adenosylmethionine synthase from Trichormus variabilis (strain ATCC 29413 / PCC 7937) (Anabaena variabilis).